The chain runs to 428 residues: Adenylosuccinate synthetase (428 aa).

Residues 12–18 and 40–42 each bind GTP; these read GDEGKGK and GHT. The Proton acceptor role is filled by Asp-13. Mg(2+) contacts are provided by Asp-13 and Gly-40. IMP contacts are provided by residues 13–16, 38–41, Thr-130, Arg-144, Gln-225, Thr-240, and Arg-304; these read DEGK and NAGH. The active-site Proton donor is His-41. 300–306 is a substrate binding site; it reads VNTGRSR. GTP is bound by residues Arg-306, 332–334, and 414–416; these read KID and GVG.

Belongs to the adenylosuccinate synthetase family. Homodimer. Mg(2+) is required as a cofactor.

Its subcellular location is the cytoplasm. It carries out the reaction IMP + L-aspartate + GTP = N(6)-(1,2-dicarboxyethyl)-AMP + GDP + phosphate + 2 H(+). The protein operates within purine metabolism; AMP biosynthesis via de novo pathway; AMP from IMP: step 1/2. Its function is as follows. Plays an important role in the de novo pathway of purine nucleotide biosynthesis. Catalyzes the first committed step in the biosynthesis of AMP from IMP. The polypeptide is Adenylosuccinate synthetase (Clostridium beijerinckii (strain ATCC 51743 / NCIMB 8052) (Clostridium acetobutylicum)).